A 555-amino-acid chain; its full sequence is Glypican-6 (555 aa).

The first 23 residues, 1-23 (MPSWIGAVILPLLGLLLSLPAGA), serve as a signal peptide directing secretion. The segment covering 348–357 (PALRSARSAP) has biased composition (low complexity). The segment at 348 to 376 (PALRSARSAPENFNTRFRPYNPEERPTTA) is disordered. S529 is lipidated: GPI-anchor amidated serine. The propeptide at 530–555 (SAAQRGHSLLSWSLTCIVLALQRLCR) is removed in mature form.

The protein belongs to the glypican family.

The protein resides in the cell membrane. It is found in the secreted. Its subcellular location is the extracellular space. Its function is as follows. Cell surface proteoglycan that bears heparan sulfate. Putative cell surface coreceptor for growth factors, extracellular matrix proteins, proteases and anti-proteases. Enhances migration and invasion of cancer cells through WNT5A signaling. The polypeptide is Glypican-6 (GPC6) (Pongo abelii (Sumatran orangutan)).